A 210-amino-acid polypeptide reads, in one-letter code: MELQLAIDLLNKEEAAKLAQKVEEYVDIVEIGTPIVINEGLPAVQHLNENINNAKVLADLKIMDAADYEVSQAVKYGADIVTILGVAEDASIKAAVEEAHKHGKALLVDMIAVQNLEQRAKELDEMGADYIAVHTGYDLQAEGKSPLDSLRTVKSVIKNSKVAVAGGIKPDTIKDIVAEDPDLVIVGGGIANADDPVEAAKQCRVAIEGK.

Belongs to the HPS/KGPDC family. HPS subfamily.

The catalysed reaction is D-ribulose 5-phosphate + formaldehyde = D-arabino-hex-3-ulose 6-phosphate. It functions in the pathway one-carbon metabolism; formaldehyde assimilation via RuMP pathway; D-fructose 6-phosphate from D-ribulose 5-phosphate and formaldehyde: step 1/2. Functionally, catalyzes the condensation of ribulose 5-phosphate with formaldehyde to form 3-hexulose 6-phosphate. In Staphylococcus epidermidis (strain ATCC 12228 / FDA PCI 1200), this protein is 3-hexulose-6-phosphate synthase.